A 137-amino-acid polypeptide reads, in one-letter code: Large-conductance mechanosensitive channel (137 aa).

The next 3 helical transmembrane spans lie at 15–35 (IDLAIGVIIGGAFGGLVNSIV), 38–58 (ILMPIIGFITGGIDFSNMFIQ), and 80–100 (GNFITLLINFLIIAWVLFLFV).

This sequence belongs to the MscL family. As to quaternary structure, homopentamer.

The protein localises to the cell inner membrane. Functionally, channel that opens in response to stretch forces in the membrane lipid bilayer. May participate in the regulation of osmotic pressure changes within the cell. The protein is Large-conductance mechanosensitive channel of Bartonella quintana (strain Toulouse) (Rochalimaea quintana).